The primary structure comprises 506 residues: Lysine--tRNA ligase (506 aa).

Mg(2+)-binding residues include Glu-415 and Glu-422.

This sequence belongs to the class-II aminoacyl-tRNA synthetase family. As to quaternary structure, homodimer. Requires Mg(2+) as cofactor.

The protein resides in the cytoplasm. The enzyme catalyses tRNA(Lys) + L-lysine + ATP = L-lysyl-tRNA(Lys) + AMP + diphosphate. The protein is Lysine--tRNA ligase (lysS) of Buchnera aphidicola subsp. Acyrthosiphon pisum (strain APS) (Acyrthosiphon pisum symbiotic bacterium).